Reading from the N-terminus, the 314-residue chain is Serine/threonine-protein phosphatase PP-Y (314 aa).

Positions 60, 62, 88, and 120 each coordinate Mn(2+). The Proton donor role is filled by H121. Mn(2+) is bound by residues H169 and H244.

Belongs to the PPP phosphatase family. PP-Y subfamily. Requires Mn(2+) as cofactor.

It catalyses the reaction O-phospho-L-seryl-[protein] + H2O = L-seryl-[protein] + phosphate. The enzyme catalyses O-phospho-L-threonyl-[protein] + H2O = L-threonyl-[protein] + phosphate. The protein is Serine/threonine-protein phosphatase PP-Y (PpY-55A) of Drosophila melanogaster (Fruit fly).